The primary structure comprises 238 residues: Segregation and condensation protein A (238 aa).

The protein belongs to the ScpA family. As to quaternary structure, component of a cohesin-like complex composed of ScpA, ScpB and the Smc homodimer, in which ScpA and ScpB bind to the head domain of Smc. The presence of the three proteins is required for the association of the complex with DNA.

Its subcellular location is the cytoplasm. Participates in chromosomal partition during cell division. May act via the formation of a condensin-like complex containing Smc and ScpB that pull DNA away from mid-cell into both cell halves. This chain is Segregation and condensation protein A, found in Macrococcus caseolyticus (strain JCSC5402) (Macrococcoides caseolyticum).